The following is a 183-amino-acid chain: Phosphinothricin N-acetyltransferase (183 aa).

The region spanning 8-173 (ADIRRATEAD…WQLDFSLPVP (166 aa)) is the N-acetyltransferase domain. Acetyl-CoA-binding positions include 91–93 (VYV), 99–104 (RTGLGS), and asparagine 130.

The protein belongs to the acetyltransferase family. PAT/BAR subfamily.

The catalysed reaction is phosphinothricin + acetyl-CoA = N-acetylphosphinothricin + CoA + H(+). Functionally, inactivates phosphinothricin (PPT) by transfer of an acetyl group from acetyl CoA. Can also acetylate demethylphosphinothricin but not PTT or glutamate. This enzyme is an effector of phosphinothricin tripeptide (PTT or bialaphos) resistance. The polypeptide is Phosphinothricin N-acetyltransferase (Streptomyces hygroscopicus).